Here is a 288-residue protein sequence, read N- to C-terminus: Phytanoyl-CoA dioxygenase domain-containing protein 1 homolog (288 aa).

2-oxoglutarate contacts are provided by residues Lys95, Met134, 149-151 (HVD), and Trp167. The Fe cation site is built by His149 and Asp151. A Fe cation-binding site is contributed by His242. 2 residues coordinate 2-oxoglutarate: Ser244 and Arg253.

Belongs to the PhyH family. PHYHD1 subfamily. Fe cation is required as a cofactor.

Has alpha-ketoglutarate-dependent dioxygenase activity. Does not show detectable activity towards fatty acid CoA thioesters. Is not expected to be active with phytanoyl CoA. The protein is Phytanoyl-CoA dioxygenase domain-containing protein 1 homolog of Caenorhabditis elegans.